The primary structure comprises 885 residues: Alanine--tRNA ligase (885 aa).

Positions 426–444 (QEQKTRARQDRREKQRGGA) are enriched in basic and acidic residues. The segment at 426 to 445 (QEQKTRARQDRREKQRGGAE) is disordered. Zn(2+)-binding residues include His-568, His-572, Cys-671, and His-675.

Belongs to the class-II aminoacyl-tRNA synthetase family. It depends on Zn(2+) as a cofactor.

It is found in the cytoplasm. The enzyme catalyses tRNA(Ala) + L-alanine + ATP = L-alanyl-tRNA(Ala) + AMP + diphosphate. In terms of biological role, catalyzes the attachment of alanine to tRNA(Ala) in a two-step reaction: alanine is first activated by ATP to form Ala-AMP and then transferred to the acceptor end of tRNA(Ala). Also edits incorrectly charged Ser-tRNA(Ala) and Gly-tRNA(Ala) via its editing domain. In Chlorobium phaeovibrioides (strain DSM 265 / 1930) (Prosthecochloris vibrioformis (strain DSM 265)), this protein is Alanine--tRNA ligase.